The primary structure comprises 358 residues: Feruloyl CoA ortho-hydroxylase F6H1-1 (358 aa).

The 109-residue stretch at 200–308 (TKESLLMGSK…RISVPIFVNP (109 aa)) folds into the Fe2OG dioxygenase domain. Tyrosine 216 contacts 2-oxoglutarate. Histidine 231, aspartate 233, and histidine 289 together coordinate Fe cation. 2-oxoglutarate contacts are provided by arginine 299 and serine 301.

This sequence belongs to the iron/ascorbate-dependent oxidoreductase family. L-ascorbate is required as a cofactor. The cofactor is Fe(2+).

The catalysed reaction is (E)-feruloyl-CoA + 2-oxoglutarate + O2 = (E)-6-hydroxyferuloyl-CoA + succinate + CO2. It functions in the pathway phenylpropanoid metabolism. Functionally, 2-oxoglutarate (OG)- and Fe(II)-dependent dioxygenase (2OGD) involved in scopoletin biosynthesis. Converts feruloyl CoA into 6'-hydroxyferuloyl CoA. The sequence is that of Feruloyl CoA ortho-hydroxylase F6H1-1 from Ipomoea batatas (Sweet potato).